The primary structure comprises 406 residues: Heparan sulfate glucosamine 3-O-sulfotransferase 3A1 (406 aa).

Residues 1–24 (MAPPGPASALSTSAEPLSRSIFRK) lie on the Cytoplasmic side of the membrane. Residues 25–43 (FLLMLCSLLTSLYVFYCLA) form a helical; Signal-anchor for type II membrane protein membrane-spanning segment. Residues 44–406 (ERCQTLSGPV…MTGHDFGWDG (363 aa)) are Lumenal-facing. Basic residues predominate over residues 92-102 (QLPQWRRRRPP). Residues 92-134 (QLPQWRRRRPPAPRDDGEEAAWEEESPGLSGGPGGSGAGSTVA) form a disordered region. The span at 107-117 (DGEEAAWEEES) shows a compositional bias: acidic residues. Residues 120 to 129 (LSGGPGGSGA) show a composition bias toward gly residues. 162–166 (KGGTR) contributes to the 3'-phosphoadenylyl sulfate binding site. Residues arginine 166, 184-190 (EPHFFDR), and 215-218 (KTPS) contribute to the substrate site. Residues arginine 243 and serine 251 each coordinate 3'-phosphoadenylyl sulfate. Substrate is bound at residue 255–259 (QTLSK). Asparagine 273 is a glycosylation site (N-linked (GlcNAc...) asparagine). A substrate-binding site is contributed by 283 to 284 (WS). Asparagine 344 carries N-linked (GlcNAc...) asparagine glycosylation. Cysteine 351 and cysteine 363 are disulfide-bonded. 367 to 370 (TKGR) lines the substrate pocket. 368–372 (KGRTH) is a binding site for 3'-phosphoadenylyl sulfate.

This sequence belongs to the sulfotransferase 1 family. Ubiquitous. Most abundant in heart and placenta, followed by liver and kidney.

The protein localises to the golgi apparatus membrane. The catalysed reaction is alpha-D-glucosaminyl-[heparan sulfate](n) + 3'-phosphoadenylyl sulfate = 3-sulfo-alpha-D-glucosaminyl-[heparan sulfate](n) + adenosine 3',5'-bisphosphate + H(+). Sulfotransferase that utilizes 3'-phospho-5'-adenylyl sulfate (PAPS) to catalyze the transfer of a sulfo group to an N-unsubstituted glucosamine linked to a 2-O-sulfo iduronic acid unit on heparan sulfate. Catalyzes the O-sulfation of glucosamine in IdoUA2S-GlcNS and also in IdoUA2S-GlcNH2. The substrate-specific O-sulfation generates an enzyme-modified heparan sulfate which acts as a binding receptor to Herpes simplex virus-1 (HSV-1) and permits its entry. Unlike HS3ST1/3-OST-1, does not convert non-anticoagulant heparan sulfate to anticoagulant heparan sulfate. This is Heparan sulfate glucosamine 3-O-sulfotransferase 3A1 (HS3ST3A1) from Homo sapiens (Human).